The following is a 238-amino-acid chain: Sugar fermentation stimulation protein homolog (238 aa).

Belongs to the SfsA family.

This Vibrio vulnificus (strain CMCP6) protein is Sugar fermentation stimulation protein homolog.